A 769-amino-acid chain; its full sequence is Trehalose 6-phosphate phosphorylase (769 aa).

342 to 343 contacts substrate; it reads WD. The Proton donor role is filled by glutamate 480. 589-590 contacts substrate; sequence KQ.

The protein belongs to the glycosyl hydrolase 65 family. As to quaternary structure, monomer.

It catalyses the reaction alpha,alpha-trehalose 6-phosphate + phosphate = beta-D-glucose 1-phosphate + D-glucose 6-phosphate. Its function is as follows. Catalyzes the conversion of trehalose 6-phosphate into glucose 1-phosphate and glucose 6-phosphate. This is Trehalose 6-phosphate phosphorylase (trePP) from Lactococcus lactis subsp. lactis (strain IL1403) (Streptococcus lactis).